We begin with the raw amino-acid sequence, 97 residues long: HssA/B-like protein 44 (97 aa).

Disordered stretches follow at residues 1 to 22 and 62 to 97; these read MTLF…SSIA and ASTS…CGCN. Basic residues predominate over residues 72–84; the sequence is RPGRGHGGPHGHG. Residues 85 to 97 are compositionally biased toward gly residues; that stretch reads RGGSGSGSSCGCN.

It belongs to the hssA/B family.

The protein is HssA/B-like protein 44 (hssl44) of Dictyostelium discoideum (Social amoeba).